Reading from the N-terminus, the 131-residue chain is Small ribosomal subunit protein eS8 (131 aa).

The disordered stretch occupies residues 1–42; it reads MKLGAYYKGGDLKKPSGGKKRKVRKTKKKALGGGPPQIPKLG. Positions 16–30 are enriched in basic residues; it reads SGGKKRKVRKTKKKA.

Belongs to the eukaryotic ribosomal protein eS8 family. As to quaternary structure, part of the 30S ribosomal subunit.

In Pyrobaculum aerophilum (strain ATCC 51768 / DSM 7523 / JCM 9630 / CIP 104966 / NBRC 100827 / IM2), this protein is Small ribosomal subunit protein eS8.